We begin with the raw amino-acid sequence, 163 residues long: UPF0763 protein C8J_0930 (163 aa).

Belongs to the UPF0763 family.

The sequence is that of UPF0763 protein C8J_0930 from Campylobacter jejuni subsp. jejuni serotype O:6 (strain 81116 / NCTC 11828).